A 382-amino-acid chain; its full sequence is Succinyl-diaminopimelate desuccinylase (382 aa).

His-70 provides a ligand contact to Zn(2+). Asp-72 is an active-site residue. Asp-103 is a binding site for Zn(2+). Residue Glu-137 is the Proton acceptor of the active site. The Zn(2+) site is built by Glu-138, Glu-166, and His-355.

This sequence belongs to the peptidase M20A family. DapE subfamily. As to quaternary structure, homodimer. It depends on Zn(2+) as a cofactor. Co(2+) serves as cofactor.

The enzyme catalyses N-succinyl-(2S,6S)-2,6-diaminopimelate + H2O = (2S,6S)-2,6-diaminopimelate + succinate. Its pathway is amino-acid biosynthesis; L-lysine biosynthesis via DAP pathway; LL-2,6-diaminopimelate from (S)-tetrahydrodipicolinate (succinylase route): step 3/3. In terms of biological role, catalyzes the hydrolysis of N-succinyl-L,L-diaminopimelic acid (SDAP), forming succinate and LL-2,6-diaminopimelate (DAP), an intermediate involved in the bacterial biosynthesis of lysine and meso-diaminopimelic acid, an essential component of bacterial cell walls. In Paracoccus denitrificans (strain Pd 1222), this protein is Succinyl-diaminopimelate desuccinylase.